A 1051-amino-acid chain; its full sequence is MSSSNSSSAVRSSAKHAAERIQQHLPPNSNHAVSLSSSSLNLPARTSIVAPGIAHSSRLKDRPSASSSSSSSSVSASSPSTRRSGTPVRRSQSKDFDDDNDPGRVRVSVRVRPRNGEELISDADFADLVELQPEIKRLKLRKNNWNSESYKFDEVFTDTASQKRVYEGVAKPVVEGVLSGYNGTIMAYGQTGTGKTYTVGKIGKDDAAERGIMVRALEDILLNASSASISVEISYLQLYMETIQDLLAPEKNNISINEDAKTGEVSVPGATVVNIQDLDHFLQVLQVGETNRHAANTKMNTESSRSHAILTVYVRRAMNEKTEKAKPESLGDKAIPRVRKSKLLIVDLAGSERINKSGTDGHMIEEAKFINLSLTSLGKCINALAEGSSHIPTRDSKLTRLLRDSFGGSARTSLIITIGPSARYHAETTSTIMFGQRAMKIVNMVKLKEEFDYESLCRKLETQVDHLTAEVERQNKLRNSEKHELEKRLRECENSFAEAEKNAVTRSKFLEKENTRLELSMKELLKDLQLQKDQCDLMHDKAIQLEMKLKNTKQQQLENSAYEAKLADTSQVYEKKIAELVQRVEDEQARSTNAEHQLTEMKNILSKQQKSIHEQEKGNYQYQRELAETTHTYESKIAELQKKLEGENARSNAAEDQLRQMKRLISDRQVISQENEEANELKIKLEELSQMYESTVDELQTVKLDYDDLLQQKEKLGEEVRDMKERLLLEEKQRKQMESELSKLKKNLRESENVVEEKRYMKEDLSKGSAESGAQTGSQRSQGLKKSLSGQRATMARLCEEVGIQKILQLIKSEDLEVQIQAVKVVANLAAEEANQVKIVEEGGVEALLMLVQSSQNSTILRVASGAIANLAMNEKSQDLIMNKGGAQLLAKMVTKTDDPQTLRMVAGALANLCGNEKFLKLLKEEEGIKGLLTMAQSGNIDIIAQVARGMANFAKCETREIMQGRRKGRSLLLEEGVLEWLTSNSHIDSASTQRHIELALCHLAQNEENANDFKRTGSVTEIVRISVESSRDDIRSLAKKILKTNPYFSS.

Composition is skewed to low complexity over residues M1–S12, N28–S39, and S64–R90. 2 disordered regions span residues M1–S39 and P51–V109. A Kinesin motor domain is found at R104–I441. G189–T196 lines the ATP pocket. The D-BOX motif lies at R411 to G419. Coiled-coil stretches lie at residues D452–Q534 and D568–M761. The segment covering N753–S766 has biased composition (basic and acidic residues). The tract at residues N753 to L788 is disordered. Over residues S772–L788 the composition is skewed to polar residues. 3 ARM repeats span residues R792–A831, E833–M873, and E875–G915. An ARM 4; degenerate repeat occupies E917 to K956.

The protein belongs to the TRAFAC class myosin-kinesin ATPase superfamily. Kinesin family. Ungrouped subfamily. As to quaternary structure, interacts (via C-terminus) with NEK5. As to expression, expressed in young root hair-forming cells and in root hair-producing cells at the boundary between the hypocotyl and root. Expressed in cotyledons, young leaves, trichomes and flowers.

Its subcellular location is the cytoplasm. The protein resides in the cytoskeleton. The protein localises to the spindle. It is found in the phragmoplast. Its function is as follows. Acts as a plus-end microtubule-dependent motor protein. Involved in the control of root hair tip growth by promoting microtubule depolymerization and limiting the accumulation of endoplasmic microtubules. In vitro, binds to polymerized actin through ARM repeats, and to polymerized tubulin through N-terminal motor domain. In Arabidopsis thaliana (Mouse-ear cress), this protein is Kinesin-like protein KIN-UC.